The sequence spans 346 residues: Glycosyltransferase 1 domain-containing protein 1 (346 aa).

An N-terminal signal peptide occupies residues 1–16 (MRLLFLAVLRPHTGNA).

This sequence belongs to the glycosyltransferase group 1 family. Glycosyltransferase 4 subfamily.

Its subcellular location is the secreted. In Pongo abelii (Sumatran orangutan), this protein is Glycosyltransferase 1 domain-containing protein 1 (GLT1D1).